We begin with the raw amino-acid sequence, 530 residues long: Pancreatic secretory granule membrane major glycoprotein GP2 (530 aa).

The signal sequence occupies residues M1–P21. N-linked (GlcNAc...) asparagine glycosylation is present at N33. 11 disulfide bridges follow: C41/C52, C56/C150, C78/C168, C100/C138, C106/C173, C131/C139, C183/C193, C187/C202, C204/C234, C222/C313, and C254/C277. The D10C stretch occupies residues D54–S74. N58 and N127 each carry an N-linked (GlcNAc...) asparagine glycan. The EGF-like domain occupies A179 to G223. N197 and N209 each carry an N-linked (GlcNAc...) asparagine glycan. The segment at D221 to A314 is ZP-N. In terms of domain architecture, ZP spans D221–S477. N-linked (GlcNAc...) asparagine glycosylation is found at N284 and N320. Positions Y315–V338 are flexible ZP-N/ZP-C linker. The tract at residues G339–L350 is internal hydrophobic patch (IHP). Residues G339–S477 are ZP-C. 3 disulfides stabilise this stretch: C394/C454, C415/C470, and C459/C466. Residues L484–P492 are external hydrophobic patch (EHP). N505 carries the GPI-anchor amidated asparagine lipid modification. Residues G506–F530 constitute a propeptide, removed in mature form.

In terms of assembly, interacts with SYCN. Interacts with bacterial adhesin fimH. Post-translationally, N-glycosylated. Expressed in pancreas.

Its subcellular location is the zymogen granule membrane. The protein localises to the secreted. It is found in the cell membrane. It localises to the apical cell membrane. The protein resides in the membrane raft. Its subcellular location is the endosome. In terms of biological role, functions as an intestinal M-cell transcytotic receptor specific of type-I-piliated bacteria that participates in the mucosal immune response toward these bacteria. At the apical membrane of M-cells it binds fimH, a protein of the bacteria type I pilus tip. Internalizes bound bacteria, like E.coli and S.typhimurium, from the lumen of the intestine and delivers them, through M-cells, to the underlying organized lymphoid follicles where they are captured by antigen-presenting dendritic cells to elicit a mucosal immune response. This Rattus norvegicus (Rat) protein is Pancreatic secretory granule membrane major glycoprotein GP2.